Consider the following 214-residue polypeptide: Glycerol-3-phosphate acyltransferase (214 aa).

Helical transmembrane passes span 8 to 28, 70 to 90, 111 to 131, 144 to 164, and 165 to 185; these read LILA…QIFF, LLPL…LIAV, AGVV…IFIV, IVVA…GIIL, and PSYD…ILIR.

Belongs to the PlsY family. Probably interacts with PlsX.

It localises to the cell membrane. It carries out the reaction an acyl phosphate + sn-glycerol 3-phosphate = a 1-acyl-sn-glycero-3-phosphate + phosphate. Its pathway is lipid metabolism; phospholipid metabolism. Functionally, catalyzes the transfer of an acyl group from acyl-phosphate (acyl-PO(4)) to glycerol-3-phosphate (G3P) to form lysophosphatidic acid (LPA). This enzyme utilizes acyl-phosphate as fatty acyl donor, but not acyl-CoA or acyl-ACP. This is Glycerol-3-phosphate acyltransferase from Streptococcus gordonii (strain Challis / ATCC 35105 / BCRC 15272 / CH1 / DL1 / V288).